A 96-amino-acid polypeptide reads, in one-letter code: Transcription and mRNA export factor SUS1 (96 aa).

The protein belongs to the ENY2 family. Component of the nuclear pore complex (NPC)-associated TREX-2 complex (transcription and export complex 2), composed of at least SUS1, SAC3, THP1, SEM1, and CDC31. TREX-2 contains 2 SUS1 chains. The TREX-2 complex interacts with the nucleoporin NUP1. Component of the 1.8 MDa SAGA transcription coactivator-HAT complex. SAGA is built of 5 distinct domains with specialized functions. Within the SAGA complex, SUS1, SGF11, SGF73 and UBP8 form an additional subcomplex of SAGA called the DUB module (deubiquitination module). Interacts directly with THP1, SAC3, SGF11, and with the RNA polymerase II.

The protein resides in the nucleus. Its subcellular location is the nucleoplasm. It is found in the cytoplasm. It localises to the P-body. In terms of biological role, involved in mRNA export coupled transcription activation by association with both the TREX-2 and the SAGA complexes. At the promoters, SAGA is required for recruitment of the basal transcription machinery. It influences RNA polymerase II transcriptional activity through different activities such as TBP interaction and promoter selectivity, interaction with transcription activators, and chromatin modification through histone acetylation and deubiquitination. Within the SAGA complex, participates in a subcomplex required for deubiquitination of H2B and for the maintenance of steady-state H3 methylation levels. The TREX-2 complex functions in docking export-competent ribonucleoprotein particles (mRNPs) to the nuclear entrance of the nuclear pore complex (nuclear basket). TREX-2 participates in mRNA export and accurate chromatin positioning in the nucleus by tethering genes to the nuclear periphery. May also be involved in cytoplasmic mRNA decay by interaction with components of P-bodies. The sequence is that of Transcription and mRNA export factor SUS1 from Kluyveromyces lactis (strain ATCC 8585 / CBS 2359 / DSM 70799 / NBRC 1267 / NRRL Y-1140 / WM37) (Yeast).